The chain runs to 418 residues: MFNRPKGTRDFAPSEMKKRKIIENKLKSVFMAYNFNEINTPTFEYFELLSKKTGEDIRKQLFVFKDHGNREMGLRPEITSSVVRFYINELKNLPKPQKLFYFANCFRYEQPQAGRYREFWQMGCELLGSKNPIADAEVINLAMDGLNKINMDYEIHIGHLGVLKGVFEEFGLTEDEELKIRRLIDKEDYENLEKCLIELEENKNIIIKDIIFSVLNSKGTVEEVIGNLKEILKNYPKSIEALNNLEEIMEFVKRNNYIINLGIARGLDYYTGMVFEVYGKKEGARQVCGGGRYDNLIELFEGAPTPAVGFAYGFDRIMLNIDDFEVEDKRILIVPIKKDKKLLKECLIIADKLREMEKIVEVDLMNRKLNKALNYANTVGISKVIMIGEKELNERKISIKDMETGEQKLIDLEELSNI.

Belongs to the class-II aminoacyl-tRNA synthetase family.

The protein resides in the cytoplasm. The enzyme catalyses tRNA(His) + L-histidine + ATP = L-histidyl-tRNA(His) + AMP + diphosphate + H(+). The chain is Histidine--tRNA ligase from Methanococcus aeolicus (strain ATCC BAA-1280 / DSM 17508 / OCM 812 / Nankai-3).